A 412-amino-acid polypeptide reads, in one-letter code: Short-chain specific acyl-CoA dehydrogenase, mitochondrial (412 aa).

The N-terminal 24 residues, methionine 1–glutamine 24, are a transit peptide targeting the mitochondrion. Residue threonine 27 is modified to Phosphothreonine. Lysine 51 is subject to N6-acetyllysine; alternate. The residue at position 51 (lysine 51) is an N6-succinyllysine; alternate. Lysine 72 carries the post-translational modification N6-acetyllysine. The residue at position 129 (lysine 129) is an N6-acetyllysine; alternate. Lysine 129 bears the N6-succinyllysine; alternate mark. FAD contacts are provided by residues phenylalanine 152–serine 161 and tryptophan 185–threonine 187. Serine 161 provides a ligand contact to substrate. Lysine 208 bears the N6-acetyllysine mark. Lysine 262 is modified (N6-acetyllysine; alternate). Position 262 is an N6-succinyllysine; alternate (lysine 262). Aspartate 269–arginine 272 lines the substrate pocket. Position 297 (arginine 297) interacts with FAD. At lysine 306 the chain carries N6-acetyllysine; alternate. N6-succinyllysine; alternate is present on lysine 306. Residues glutamine 308 and glutamine 365–glycine 369 contribute to the FAD site. The active-site Proton acceptor is the glutamate 392. Glycine 393 is a substrate binding site. Threonine 394 to glutamate 396 provides a ligand contact to FAD.

This sequence belongs to the acyl-CoA dehydrogenase family. As to quaternary structure, homotetramer. Requires FAD as cofactor.

The protein resides in the mitochondrion matrix. It carries out the reaction a short-chain 2,3-saturated fatty acyl-CoA + oxidized [electron-transfer flavoprotein] + H(+) = a short-chain (2E)-enoyl-CoA + reduced [electron-transfer flavoprotein]. The enzyme catalyses butanoyl-CoA + oxidized [electron-transfer flavoprotein] + H(+) = (2E)-butenoyl-CoA + reduced [electron-transfer flavoprotein]. The catalysed reaction is pentanoyl-CoA + oxidized [electron-transfer flavoprotein] + H(+) = (2E)-pentenoyl-CoA + reduced [electron-transfer flavoprotein]. It catalyses the reaction hexanoyl-CoA + oxidized [electron-transfer flavoprotein] + H(+) = (2E)-hexenoyl-CoA + reduced [electron-transfer flavoprotein]. Its pathway is lipid metabolism; mitochondrial fatty acid beta-oxidation. Short-chain specific acyl-CoA dehydrogenase is one of the acyl-CoA dehydrogenases that catalyze the first step of mitochondrial fatty acid beta-oxidation, an aerobic process breaking down fatty acids into acetyl-CoA and allowing the production of energy from fats. The first step of fatty acid beta-oxidation consists in the removal of one hydrogen from C-2 and C-3 of the straight-chain fatty acyl-CoA thioester, resulting in the formation of trans-2-enoyl-CoA. Among the different mitochondrial acyl-CoA dehydrogenases, short-chain specific acyl-CoA dehydrogenase acts specifically on acyl-CoAs with saturated 4 to 6 carbons long primary chains. The sequence is that of Short-chain specific acyl-CoA dehydrogenase, mitochondrial (ACADS) from Homo sapiens (Human).